We begin with the raw amino-acid sequence, 334 residues long: AT-hook motif nuclear-localized protein 2 (334 aa).

Residues Met-1–Val-21 are compositionally biased toward low complexity. Disordered stretches follow at residues Met-1–Ser-103 and Ser-109–Phe-128. Pro residues predominate over residues Ser-44 to Gln-54. Residues Ile-71–Lys-80 are compositionally biased toward basic residues. The short motif at Lys-72–Lys-80 is the Bipartite nuclear localization signal element. The a.T hook DNA-binding region spans Lys-72–Asp-84. The segment covering Leu-90–Ser-103 has biased composition (polar residues). The PPC domain maps to Ala-147–Pro-287. Residues Ser-306–Ser-319 show a composition bias toward polar residues. Residues Ser-306–Thr-334 form a disordered region.

The protein resides in the nucleus. Transcription factor that specifically binds AT-rich DNA sequences related to the nuclear matrix attachment regions (MARs). This is AT-hook motif nuclear-localized protein 2 from Arabidopsis thaliana (Mouse-ear cress).